We begin with the raw amino-acid sequence, 527 residues long: Bifunctional dihydrofolate reductase-thymidylate synthase (527 aa).

A DHFR domain is found at 28-238 (PFSVVVASDE…KKYQFEKLVP (211 aa)). Valine 32 is a binding site for substrate. NADP(+) is bound by residues alanine 34 and 40–46 (GIGDGGT). Aspartate 54 provides a ligand contact to substrate. Residues 84–86 (RKT) and 105–108 (LSRS) contribute to the NADP(+) site. Residues isoleucine 160, tyrosine 166, and threonine 184 each coordinate substrate. Residue 161 to 168 (GGGTIYKQ) participates in NADP(+) binding. The segment at 243-527 (EEQYLNLVGR…YPVISMEMAV (285 aa)) is thymidylate synthase. Arginine 263 provides a ligand contact to dUMP. Cysteine 409 is an active-site residue. DUMP is bound by residues histidine 410, 428 to 432 (QRSCD), asparagine 440, and 470 to 472 (HVY).

This sequence in the N-terminal section; belongs to the dihydrofolate reductase family. In the C-terminal section; belongs to the thymidylate synthase family. Homodimer.

The catalysed reaction is dUMP + (6R)-5,10-methylene-5,6,7,8-tetrahydrofolate = 7,8-dihydrofolate + dTMP. It catalyses the reaction (6S)-5,6,7,8-tetrahydrofolate + NADP(+) = 7,8-dihydrofolate + NADPH + H(+). The protein operates within pyrimidine metabolism; dTTP biosynthesis. It functions in the pathway cofactor biosynthesis; tetrahydrofolate biosynthesis; 5,6,7,8-tetrahydrofolate from 7,8-dihydrofolate: step 1/1. Bifunctional enzyme. Involved in de novo dTMP biosynthesis. Key enzyme in folate metabolism. Catalyzes an essential reaction for de novo glycine and purine synthesis, DNA precursor synthesis, and for the conversion of dUMP to dTMP. This Trypanosoma brucei brucei protein is Bifunctional dihydrofolate reductase-thymidylate synthase.